Reading from the N-terminus, the 66-residue chain is Large ribosomal subunit protein bL35 (66 aa).

It belongs to the bacterial ribosomal protein bL35 family.

The protein is Large ribosomal subunit protein bL35 of Borrelia garinii subsp. bavariensis (strain ATCC BAA-2496 / DSM 23469 / PBi) (Borreliella bavariensis).